Here is a 207-residue protein sequence, read N- to C-terminus: Large ribosomal subunit protein uL4 (207 aa).

The segment at 44 to 76 (KRRGTASAKTRSEVRGGGRKPWRQKGTGRARHG) is disordered. Over residues 60 to 76 (GGRKPWRQKGTGRARHG) the composition is skewed to basic residues.

The protein belongs to the universal ribosomal protein uL4 family. Part of the 50S ribosomal subunit.

In terms of biological role, one of the primary rRNA binding proteins, this protein initially binds near the 5'-end of the 23S rRNA. It is important during the early stages of 50S assembly. It makes multiple contacts with different domains of the 23S rRNA in the assembled 50S subunit and ribosome. Functionally, forms part of the polypeptide exit tunnel. This chain is Large ribosomal subunit protein uL4, found in Natranaerobius thermophilus (strain ATCC BAA-1301 / DSM 18059 / JW/NM-WN-LF).